The primary structure comprises 138 residues: Small ribosomal subunit protein bS6 (138 aa).

The interval 94–138 (VKQDGPLPTPKPTSKENEPEKEEVKPTEEKTESPSKDEKKEDSKE) is disordered. A compositionally biased stretch (basic and acidic residues) spans 106–138 (TSKENEPEKEEVKPTEEKTESPSKDEKKEDSKE).

It belongs to the bacterial ribosomal protein bS6 family.

In terms of biological role, binds together with bS18 to 16S ribosomal RNA. This chain is Small ribosomal subunit protein bS6, found in Prochlorococcus marinus (strain NATL2A).